A 308-amino-acid chain; its full sequence is Ribosomal RNA small subunit methyltransferase H (308 aa).

S-adenosyl-L-methionine contacts are provided by residues 36–38 (GGH), D55, F86, D103, and Q110.

It belongs to the methyltransferase superfamily. RsmH family.

It is found in the cytoplasm. It catalyses the reaction cytidine(1402) in 16S rRNA + S-adenosyl-L-methionine = N(4)-methylcytidine(1402) in 16S rRNA + S-adenosyl-L-homocysteine + H(+). Functionally, specifically methylates the N4 position of cytidine in position 1402 (C1402) of 16S rRNA. The chain is Ribosomal RNA small subunit methyltransferase H from Helicobacter pylori (strain Shi470).